Consider the following 1273-residue polypeptide: DNA-directed RNA polymerase subunit beta (1273 aa).

The protein belongs to the RNA polymerase beta chain family. The RNAP catalytic core consists of 2 alpha, 1 beta, 1 beta' and 1 omega subunit. When a sigma factor is associated with the core the holoenzyme is formed, which can initiate transcription.

The enzyme catalyses RNA(n) + a ribonucleoside 5'-triphosphate = RNA(n+1) + diphosphate. Its function is as follows. DNA-dependent RNA polymerase catalyzes the transcription of DNA into RNA using the four ribonucleoside triphosphates as substrates. The protein is DNA-directed RNA polymerase subunit beta of Aster yellows witches'-broom phytoplasma (strain AYWB).